Here is a 468-residue protein sequence, read N- to C-terminus: tRNA modification GTPase MnmE (468 aa).

Positions 29, 97, and 136 each coordinate (6S)-5-formyl-5,6,7,8-tetrahydrofolate. The TrmE-type G domain maps to 232–390 (GFELAIVGRP…VVAHIVARME (159 aa)). N242 provides a ligand contact to K(+). GTP-binding positions include 242–247 (NVGKSS), 261–267 (TDLAGTT), and 286–289 (DTAG). S246 is a binding site for Mg(2+). The K(+) site is built by T261, L263, and T266. Position 267 (T267) interacts with Mg(2+). Residue K468 coordinates (6S)-5-formyl-5,6,7,8-tetrahydrofolate.

It belongs to the TRAFAC class TrmE-Era-EngA-EngB-Septin-like GTPase superfamily. TrmE GTPase family. In terms of assembly, homodimer. Heterotetramer of two MnmE and two MnmG subunits. K(+) is required as a cofactor.

Its subcellular location is the cytoplasm. Functionally, exhibits a very high intrinsic GTPase hydrolysis rate. Involved in the addition of a carboxymethylaminomethyl (cmnm) group at the wobble position (U34) of certain tRNAs, forming tRNA-cmnm(5)s(2)U34. The chain is tRNA modification GTPase MnmE from Magnetococcus marinus (strain ATCC BAA-1437 / JCM 17883 / MC-1).